The following is a 97-amino-acid chain: Co-chaperonin GroES (97 aa).

Belongs to the GroES chaperonin family. Heptamer of 7 subunits arranged in a ring. Interacts with the chaperonin GroEL.

Its subcellular location is the cytoplasm. Together with the chaperonin GroEL, plays an essential role in assisting protein folding. The GroEL-GroES system forms a nano-cage that allows encapsulation of the non-native substrate proteins and provides a physical environment optimized to promote and accelerate protein folding. GroES binds to the apical surface of the GroEL ring, thereby capping the opening of the GroEL channel. In Blochmanniella floridana, this protein is Co-chaperonin GroES.